A 189-amino-acid chain; its full sequence is dCTP deaminase (189 aa).

Residues 112–117, 136–138, glutamine 157, tyrosine 171, and glutamine 181 each bind dCTP; these read KSTYAR and TLE. Glutamate 138 acts as the Proton donor/acceptor in catalysis.

Belongs to the dCTP deaminase family. Homotrimer.

It carries out the reaction dCTP + H2O + H(+) = dUTP + NH4(+). Its pathway is pyrimidine metabolism; dUMP biosynthesis; dUMP from dCTP (dUTP route): step 1/2. Catalyzes the deamination of dCTP to dUTP. This chain is dCTP deaminase, found in Teredinibacter turnerae (strain ATCC 39867 / T7901).